A 345-amino-acid polypeptide reads, in one-letter code: Histidinol-phosphate aminotransferase (345 aa).

N6-(pyridoxal phosphate)lysine is present on Lys206.

The protein belongs to the class-II pyridoxal-phosphate-dependent aminotransferase family. Histidinol-phosphate aminotransferase subfamily. Homodimer. Requires pyridoxal 5'-phosphate as cofactor.

The catalysed reaction is L-histidinol phosphate + 2-oxoglutarate = 3-(imidazol-4-yl)-2-oxopropyl phosphate + L-glutamate. It functions in the pathway amino-acid biosynthesis; L-histidine biosynthesis; L-histidine from 5-phospho-alpha-D-ribose 1-diphosphate: step 7/9. In Bacteroides fragilis (strain YCH46), this protein is Histidinol-phosphate aminotransferase.